A 421-amino-acid polypeptide reads, in one-letter code: Putative NBPF family member NBPF7 (421 aa).

The stretch at 87-143 forms a coiled coil; sequence IKSMLREELQFKEEKLAEQLKQAEELRQYKVLVHSQERELIQLREKLREGRDASHSL. 3 disordered regions span residues 179-251, 312-334, and 402-421; these read VHKL…KITS, EKEVLQDSPEERVTTSCSDHDVS, and YNSKPSSIPNTTLQGSFTED. 2 Olduvai domains span residues 190-279 and 280-391; these read EDEN…NILL and ENQN…RMSQ. Residues 194–217 are compositionally biased toward basic and acidic residues; the sequence is DKTKELDKVQESPAPREEQKAEEK. The segment covering 230 to 243 has biased composition (polar residues); sequence TYSNSHGPSDSNPP. Basic and acidic residues predominate over residues 312-333; that stretch reads EKEVLQDSPEERVTTSCSDHDV. The span at 403 to 421 shows a compositional bias: polar residues; the sequence is NSKPSSIPNTTLQGSFTED.

This sequence belongs to the NBPF family.

It is found in the cytoplasm. This is Putative NBPF family member NBPF7 from Homo sapiens (Human).